The following is a 329-amino-acid chain: Serpentine receptor class alpha-3 (329 aa).

7 helical membrane passes run 25 to 45 (LIYF…LKVI), 57 to 77 (ILLY…GITI), 104 to 124 (YLEM…GLLF), 144 to 164 (GIIT…IIIW), 187 to 207 (TMFF…SLLI), 238 to 258 (ICFL…GVFL), and 273 to 293 (FWVV…ILLI).

The protein belongs to the nematode receptor-like protein sra family.

Its subcellular location is the membrane. The chain is Serpentine receptor class alpha-3 (sra-3) from Caenorhabditis elegans.